Consider the following 157-residue polypeptide: uncharacterized protein (157 aa).

Positions 9 to 146 (LLINYKTLDE…GDFYVWHPET (138 aa)) constitute an N-acetyltransferase domain.

This is an uncharacterized protein from Bacillus cereus (strain ZK / E33L).